We begin with the raw amino-acid sequence, 73 residues long: Small ribosomal subunit protein bS18c (73 aa).

It belongs to the bacterial ribosomal protein bS18 family. Part of the 30S ribosomal subunit.

It is found in the plastid. The protein localises to the chloroplast. The protein is Small ribosomal subunit protein bS18c of Rhodomonas salina (Cryptomonas salina).